A 526-amino-acid chain; its full sequence is Carotenoid cleavage oxygenase 1 (526 aa).

The tract at residues 1-33 is disordered; the sequence is MAEYVFSDAPKDSHGNGVKDAVPGKQPEELPPA. Positions 133 and 164 each coordinate piceatannol. Trans-resveratrol-binding residues include Tyr133 and Lys164. Positions 197, 248, and 313 each coordinate Fe cation. Glu383 serves as a coordination point for piceatannol. Glu383 provides a ligand contact to trans-resveratrol. His510 is a binding site for Fe cation.

This sequence belongs to the carotenoid oxygenase family. Fe(2+) is required as a cofactor.

It carries out the reaction trans-resveratrol + O2 = 3,5-dihydroxybenzaldehyde + 4-hydroxybenzaldehyde. The enzyme catalyses piceatannol + O2 = 3,5-dihydroxybenzaldehyde + 3,4-dihydroxybenzaldehyde. Functionally, dioxygenase that cleaves the interphenyl C-alpha-C-beta double bond of resveratrol to yield 3,5-dihydroxybenzaldehyde and 4-hydroxybenzaldehyde. Also cleaves piceatannol, a compound that differs from resveratrol only in the occurrence of an additional hydroxyl group, which leads to the production of 3,4-dihydroxybenzaldehyde and 3,5-hydroxybenzaldehyde. Is not able to cleave trans-stilbene, 4-monohydroxy-trans-stilbene, 3,5-dihydroxy-trans-stilbene (pinosylvin), trismethoxy-resveratrol, and 3,3',5-trihydroxy-4'-methoxystilbene-3-O-beta-D-glucoside. Is not involved in carotenoid metabolism. This is Carotenoid cleavage oxygenase 1 from Neurospora crassa (strain ATCC 24698 / 74-OR23-1A / CBS 708.71 / DSM 1257 / FGSC 987).